The sequence spans 35 residues: Photosystem II reaction center protein Psb30 (35 aa).

Residues 7–27 traverse the membrane as a helical segment; sequence LIANFAALALITLAGPAVIFI.

Belongs to the Psb30/Ycf12 family. As to quaternary structure, PSII is composed of 1 copy each of membrane proteins PsbA, PsbB, PsbC, PsbD, PsbE, PsbF, PsbH, PsbI, PsbJ, PsbK, PsbL, PsbM, PsbT, PsbX, PsbY, PsbZ, Psb30/Ycf12, peripheral proteins of the oxygen-evolving complex and a large number of cofactors. It forms dimeric complexes.

Its subcellular location is the plastid. It is found in the organellar chromatophore thylakoid membrane. Functionally, a core subunit of photosystem II (PSII), probably helps stabilize the reaction center. This Paulinella chromatophora protein is Photosystem II reaction center protein Psb30.